The chain runs to 261 residues: Kallikrein 1-related peptidase b3 (261 aa).

Residues 1 to 18 (MWFLILFLALSLGGIDAA) form the signal peptide. Residues 19–24 (PPVQSR) constitute a propeptide, activation peptide. Residues 25–107 (IVGGFKCEKN…HPGFNMSLMR (83 aa)) are segment B1. The 234-residue stretch at 25-258 (IVGGFKCEKN…FTSWIKDTMA (234 aa)) folds into the Peptidase S1 domain. Disulfide bonds link Cys31/Cys173, Cys50/Cys66, Cys152/Cys219, Cys184/Cys198, and Cys209/Cys234. Residue His65 is the Charge relay system of the active site. Residue Asn102 is glycosylated (N-linked (GlcNAc...) asparagine). A segment C region spans residues 112 to 164 (FLEYDYSNDLMLLRLSKPADITDTVKPITLPTEEPKLGSTCLASGWGSITPTK). Residues 112 to 261 (FLEYDYSNDL…WIKDTMAKNP (150 aa)) are segment A. The active-site Charge relay system is Asp120. Residues 165–261 (FQFTDDLYCV…WIKDTMAKNP (97 aa)) form a segment B2 region. Ser213 acts as the Charge relay system in catalysis. His231 and Glu236 together coordinate Zn(2+).

Belongs to the peptidase S1 family. Kallikrein subfamily. 7S nerve growth factor is composed of two alpha chains, a beta dimer composed of identical chains, and two gamma chains. The cofactor is Zn(2+).

The enzyme catalyses Preferential cleavage of Arg-|-Xaa bonds in small molecule substrates. Highly selective action to release kallidin (lysyl-bradykinin) from kininogen involves hydrolysis of Met-|-Xaa or Leu-|-Xaa.. 7S NGF alpha chain stabilizes the 7S complex. The beta dimer promotes neurite growth. The gamma chain is an arginine-specific protease; it may also have plasminogen activator activity, as well as mitogenic activity for chick embryo fibroblasts. The protein is Kallikrein 1-related peptidase b3 (Klk1b3) of Mus musculus (Mouse).